The following is a 101-amino-acid chain: UPF0235 protein Cphamn1_2066 (101 aa).

Belongs to the UPF0235 family.

The polypeptide is UPF0235 protein Cphamn1_2066 (Chlorobium phaeobacteroides (strain BS1)).